Consider the following 700-residue polypeptide: Elongation factor G (700 aa).

The tr-type G domain occupies 8–290 (SLYRNIGISA…AVIDYLPAPT (283 aa)). GTP is bound by residues 17–24 (AHIDAGKT), 88–92 (DTPGH), and 142–145 (NKMD).

Belongs to the TRAFAC class translation factor GTPase superfamily. Classic translation factor GTPase family. EF-G/EF-2 subfamily.

The protein resides in the cytoplasm. Its function is as follows. Catalyzes the GTP-dependent ribosomal translocation step during translation elongation. During this step, the ribosome changes from the pre-translocational (PRE) to the post-translocational (POST) state as the newly formed A-site-bound peptidyl-tRNA and P-site-bound deacylated tRNA move to the P and E sites, respectively. Catalyzes the coordinated movement of the two tRNA molecules, the mRNA and conformational changes in the ribosome. The polypeptide is Elongation factor G (Histophilus somni (strain 129Pt) (Haemophilus somnus)).